Reading from the N-terminus, the 154-residue chain is Interleukin-2 (154 aa).

The N-terminal stretch at 1 to 20 is a signal peptide; the sequence is MYRMQLLSCIALSLALVTNS. An O-linked (GalNAc...) threonine glycan is attached at T23. A disulfide bridge links C78 with C126.

It belongs to the IL-2 family.

It localises to the secreted. In terms of biological role, cytokine produced by activated CD4-positive helper T-cells and to a lesser extend activated CD8-positive T-cells and natural killer (NK) cells that plays pivotal roles in the immune response and tolerance. Binds to a receptor complex composed of either the high-affinity trimeric IL-2R (IL2RA/CD25, IL2RB/CD122 and IL2RG/CD132) or the low-affinity dimeric IL-2R (IL2RB and IL2RG). Interaction with the receptor leads to oligomerization and conformation changes in the IL-2R subunits resulting in downstream signaling starting with phosphorylation of JAK1 and JAK3. In turn, JAK1 and JAK3 phosphorylate the receptor to form a docking site leading to the phosphorylation of several substrates including STAT5. This process leads to activation of several pathways including STAT, phosphoinositide-3-kinase/PI3K and mitogen-activated protein kinase/MAPK pathways. Functions as a T-cell growth factor and can increase NK-cell cytolytic activity as well. Promotes strong proliferation of activated B-cells and subsequently immunoglobulin production. Plays a pivotal role in regulating the adaptive immune system by controlling the survival and proliferation of regulatory T-cells, which are required for the maintenance of immune tolerance. Moreover, participates in the differentiation and homeostasis of effector T-cell subsets, including Th1, Th2, Th17 as well as memory CD8-positive T-cells. The chain is Interleukin-2 (IL2) from Macaca fascicularis (Crab-eating macaque).